The sequence spans 286 residues: Homoserine kinase (286 aa).

Position 78–88 (78–88 (PLARGLGSSSS)) interacts with ATP.

This sequence belongs to the GHMP kinase family. Homoserine kinase subfamily.

It is found in the cytoplasm. It carries out the reaction L-homoserine + ATP = O-phospho-L-homoserine + ADP + H(+). It participates in amino-acid biosynthesis; L-threonine biosynthesis; L-threonine from L-aspartate: step 4/5. Catalyzes the ATP-dependent phosphorylation of L-homoserine to L-homoserine phosphate. The protein is Homoserine kinase of Streptococcus equi subsp. equi (strain 4047).